Reading from the N-terminus, the 395-residue chain is S-adenosylmethionine synthase (395 aa).

His-16 contacts ATP. Residue Asp-18 participates in Mg(2+) binding. Residue Glu-44 participates in K(+) binding. 2 residues coordinate L-methionine: Glu-57 and Gln-100. The tract at residues 100–110 (QSPDIAQGVDR) is flexible loop. ATP is bound by residues 167–169 (DAK), 233–234 (RF), Asp-242, 248–249 (RK), Ala-265, and Lys-269. Residue Asp-242 participates in L-methionine binding. Lys-273 provides a ligand contact to L-methionine.

The protein belongs to the AdoMet synthase family. In terms of assembly, homotetramer; dimer of dimers. The cofactor is Mg(2+). K(+) serves as cofactor.

It is found in the cytoplasm. It carries out the reaction L-methionine + ATP + H2O = S-adenosyl-L-methionine + phosphate + diphosphate. It participates in amino-acid biosynthesis; S-adenosyl-L-methionine biosynthesis; S-adenosyl-L-methionine from L-methionine: step 1/1. Its function is as follows. Catalyzes the formation of S-adenosylmethionine (AdoMet) from methionine and ATP. The overall synthetic reaction is composed of two sequential steps, AdoMet formation and the subsequent tripolyphosphate hydrolysis which occurs prior to release of AdoMet from the enzyme. This is S-adenosylmethionine synthase from Burkholderia cenocepacia (strain ATCC BAA-245 / DSM 16553 / LMG 16656 / NCTC 13227 / J2315 / CF5610) (Burkholderia cepacia (strain J2315)).